The chain runs to 209 residues: uncharacterized protein (209 aa).

6 4Fe-4S ferredoxin-type domains span residues 38–67 (KTKP…IFSF), 63–92 (KIFS…KDRF), 90–119 (DRFT…KEIP), 122–151 (KTPV…EINP), 145–174 (INKE…TPDE), and 179–209 (LIVK…HRES). 12 residues coordinate [4Fe-4S] cluster: C47, C50, C53, C57, C72, C75, C78, C82, C99, C102, C105, and C109. [4Fe-4S] cluster contacts are provided by C154, C157, C160, C164, C188, C191, C194, and C198.

This is an uncharacterized protein from Methanocaldococcus jannaschii (strain ATCC 43067 / DSM 2661 / JAL-1 / JCM 10045 / NBRC 100440) (Methanococcus jannaschii).